We begin with the raw amino-acid sequence, 1201 residues long: Period circadian protein homolog 3 (1201 aa).

The disordered stretch occupies residues 1–50; it reads MPRGEAPGPGRRGAKDEALGEESGERWSPEFHLQRKLADSSHSEQQDRNR. Residues 13-50 show a composition bias toward basic and acidic residues; sequence GAKDEALGEESGERWSPEFHLQRKLADSSHSEQQDRNR. Positions 55–64 match the Nuclear export signal 1 motif; sequence LIMVVQEMKK. 2 PAS domains span residues 121–188 and 262–328; these read IASE…RAQL and YEAP…KVLK. One can recognise a PAC domain in the interval 337–380; that stretch reads HSPIRFCTQNGDYIILDSSWSSFVNPWSRKISFIIGRHKVRTSP. Positions 403-412 match the Nuclear export signal 3 motif; that stretch reads LQEQIYKLLL. The CSNK1E binding domain stretch occupies residues 555–760; that stretch reads LKRKCISCTN…SSSNTGSGPR (206 aa). Disordered regions lie at residues 717–788 and 881–923; these read YSYF…FPPA and PSMS…RSSS. Polar residues predominate over residues 721–731; that stretch reads QGDSTSKQTRS. The short motif at 729-745 is the Nuclear localization signal element; the sequence is TRSAGCRKGKHKRKKLP. Residues 733–743 are compositionally biased toward basic residues; it reads GCRKGKHKRKK. Composition is skewed to low complexity over residues 767–783 and 881–890; these read AQPCCPSAASSPHTSSP and PSMSSAMSPT. Residues 900–911 are compositionally biased toward basic and acidic residues; that stretch reads QRREEEKWEAQS. Serine 919 is modified (phosphoserine). The Nuclear export signal 2 motif lies at 925-932; that stretch reads LQLNLLQE. Residues 952-1067 form a disordered region; the sequence is TEYCVTGNNG…GSAASGSSDS (116 aa). Polar residues-rich tracts occupy residues 957–976, 983–994, 1001–1012, and 1035–1050; these read TGNNGSESSPATTGALSTGS, SHPTASALSTGS, and TPSHPTATVLSTGSPP. 5 repeat units span residues 965–982, 983–1000, 1001–1018, 1019–1036, and 1037–1054. Residues 965–1054 are 5 X 18 AA tandem repeats of S-[HP]-[AP]-T-[AT]-[GST]-[ATV]-L-S-[MT]-G-[LS]-P-P-[MRS]-[EKR]-[NST]-P; the sequence is SPATTGALST…STGSPPSESP (90 aa). Phosphoserine is present on serine 994. Position 1053 is a phosphoserine (serine 1053). Positions 1053 to 1067 are enriched in low complexity; that stretch reads SPSRTGSAASGSSDS. Positions 1123-1201 are CRY binding domain; it reads ERVKEVVLKE…CGQVLVEDSC (79 aa).

Homodimer. Component of the circadian core oscillator, which includes the CRY proteins, CLOCK or NPAS2, BMAL1 or BMAL2, CSNK1D and/or CSNK1E, TIMELESS and the PER proteins. Interacts directly with PER1, PER2, CRY1, CRY2, and TIMELESS; interaction with CRY1 and CRY2 is weak and not rhythmic. Interacts with FBXW11 and BTRC. Post-translationally, phosphorylation by CSNK1E is weak and appears to require association with PER1 and translocation to the nucleus. Ubiquitinated.

The protein resides in the cytoplasm. It is found in the nucleus. Originally described as a core component of the circadian clock. The circadian clock, an internal time-keeping system, regulates various physiological processes through the generation of approximately 24 hour circadian rhythms in gene expression, which are translated into rhythms in metabolism and behavior. It is derived from the Latin roots 'circa' (about) and 'diem' (day) and acts as an important regulator of a wide array of physiological functions including metabolism, sleep, body temperature, blood pressure, endocrine, immune, cardiovascular, and renal function. Consists of two major components: the central clock, residing in the suprachiasmatic nucleus (SCN) of the brain, and the peripheral clocks that are present in nearly every tissue and organ system. Both the central and peripheral clocks can be reset by environmental cues, also known as Zeitgebers (German for 'timegivers'). The predominant Zeitgeber for the central clock is light, which is sensed by retina and signals directly to the SCN. The central clock entrains the peripheral clocks through neuronal and hormonal signals, body temperature and feeding-related cues, aligning all clocks with the external light/dark cycle. Circadian rhythms allow an organism to achieve temporal homeostasis with its environment at the molecular level by regulating gene expression to create a peak of protein expression once every 24 hours to control when a particular physiological process is most active with respect to the solar day. Transcription and translation of core clock components (CLOCK, NPAS2, BMAL1, BMAL2, PER1, PER2, PER3, CRY1 and CRY2) plays a critical role in rhythm generation, whereas delays imposed by post-translational modifications (PTMs) are important for determining the period (tau) of the rhythms (tau refers to the period of a rhythm and is the length, in time, of one complete cycle). A diurnal rhythm is synchronized with the day/night cycle, while the ultradian and infradian rhythms have a period shorter and longer than 24 hours, respectively. Disruptions in the circadian rhythms contribute to the pathology of cardiovascular diseases, cancer, metabolic syndromes and aging. A transcription/translation feedback loop (TTFL) forms the core of the molecular circadian clock mechanism. Transcription factors, CLOCK or NPAS2 and BMAL1 or BMAL2, form the positive limb of the feedback loop, act in the form of a heterodimer and activate the transcription of core clock genes and clock-controlled genes (involved in key metabolic processes), harboring E-box elements (5'-CACGTG-3') within their promoters. The core clock genes: PER1/2/3 and CRY1/2 which are transcriptional repressors form the negative limb of the feedback loop and interact with the CLOCK|NPAS2-BMAL1|BMAL2 heterodimer inhibiting its activity and thereby negatively regulating their own expression. This heterodimer also activates nuclear receptors NR1D1, NR1D2, RORA, RORB and RORG, which form a second feedback loop and which activate and repress BMAL1 transcription, respectively. Has a redundant role with the other PER proteins PER1 and PER2 and is not essential for the circadian rhythms maintenance. In contrast, plays an important role in sleep-wake timing and sleep homeostasis probably through the transcriptional regulation of sleep homeostasis-related genes, without influencing circadian parameters. Can bind heme. In Homo sapiens (Human), this protein is Period circadian protein homolog 3 (PER3).